The following is an 888-amino-acid chain: Dilute domain-containing protein YPR089W (888 aa).

Residues 360–745 enclose the Dilute domain; that stretch reads DIVLQSYWLS…KKFLNNKIKD (386 aa). Disordered stretches follow at residues 462 to 504, 805 to 827, and 865 to 888; these read KEQQ…NNSS, KQRQ…TGDE, and LNIP…QNPW. Polar residues-rich tracts occupy residues 809–823 and 867–880; these read NEPQ…TSDF and IPSS…WSNN.

Its subcellular location is the golgi apparatus. The polypeptide is Dilute domain-containing protein YPR089W (Saccharomyces cerevisiae (strain ATCC 204508 / S288c) (Baker's yeast)).